The primary structure comprises 597 residues: K(+) efflux antiporter 6 (597 aa).

Residues 1-35 (MVEGRRRRRFSLSSQQLALLLLLLSFFLCFSVASP) form the signal peptide. A run of 12 helical transmembrane segments spans residues 177–197 (LISD…AFAC), 201–221 (PVIT…LNFI), 224–244 (MVQV…ALGL), 257–277 (VAVL…GITV), 287–307 (GVFV…KFLM), 321–341 (IGIL…LPVL), 351–371 (MLSI…LSIL), 396–416 (LAAV…GLSL), 440–460 (IEPI…MLVN), 461–481 (VHFL…VIII), 499–519 (TALL…VLLS), and 543–563 (LVTT…GILL).

The protein belongs to the monovalent cation:proton antiporter 2 (CPA2) transporter (TC 2.A.37) family. KEA (TC 2.A.37.1) subfamily. In terms of tissue distribution, expressed in roots, stems, leaves, flowers and silique.

Its subcellular location is the golgi apparatus membrane. The protein localises to the golgi apparatus. It is found in the trans-Golgi network membrane. It localises to the prevacuolar compartment membrane. The protein resides in the endomembrane system. The catalysed reaction is K(+)(in) + H(+)(out) = K(+)(out) + H(+)(in). Electroneutral K(+)/H(+) efflux antiporter involved in K(+) homeostasis and osmotic adjustment. Together with KEA4 and KEA5, promotes growth and development, and facilitates endosomal pH and ions homeostasis, as well as salt tolerance (e.g. K(+), NaCl and LiCl), probably by supporting cell wall biosynthesis during rapid etiolated seedling growth. The polypeptide is K(+) efflux antiporter 6 (Arabidopsis thaliana (Mouse-ear cress)).